Reading from the N-terminus, the 214-residue chain is Large ribosomal subunit protein uL2my, C-terminal part (214 aa).

The N-terminal 30 residues, 1–30 (MSGLVALCRARASASSSLFNSVIRPAFRNF), are a transit peptide targeting the mitochondrion. The tract at residues 157–214 (VAMNPCDHPHGGGEGKSKSSGSRGRTSVSPWGKPCKGGYKSASVKKKKKRLAEAAAKM) is disordered. Positions 163–173 (DHPHGGGEGKS) are enriched in basic and acidic residues. A compositionally biased stretch (low complexity) spans 174-185 (KSSGSRGRTSVS).

It belongs to the universal ribosomal protein uL2 family. Component of the mitochondrial ribosome large subunit.

It localises to the mitochondrion. The polypeptide is Large ribosomal subunit protein uL2my, C-terminal part (Arabidopsis thaliana (Mouse-ear cress)).